The primary structure comprises 213 residues: Receptor-binding cancer antigen expressed on SiSo cells (213 aa).

Topologically, residues 1–7 are extracellular; sequence MAITQFR. The helical; Signal-anchor for type III membrane protein transmembrane segment at 8 to 27 threads the bilayer; sequence LFKVCTCLATVFSFLKRLIC. Over 28–213 the chain is Cytoplasmic; it reads RSGRGRKLSG…EQNKIGVKLS (186 aa). At Ser36 the chain carries Phosphoserine. Residue Thr41 is modified to Phosphothreonine. Tyr94 bears the Phosphotyrosine mark. The stretch at 163-211 forms a coiled coil; it reads EDAAWQAEEVLRQQKIADREKRAAEQQRKKMEKEAQRLMKKEQNKIGVK. Residues 179-206 are compositionally biased toward basic and acidic residues; the sequence is ADREKRAAEQQRKKMEKEAQRLMKKEQN. The disordered stretch occupies residues 179–213; the sequence is ADREKRAAEQQRKKMEKEAQRLMKKEQNKIGVKLS.

Homodimer. As to expression, widely expressed. Expressed in heart, brain, spleen, liver, kidney and testis.

The protein localises to the golgi apparatus membrane. Functionally, may participate in suppression of cell proliferation and induces apoptotic cell death through activation of interleukin-1-beta converting enzyme (ICE)-like proteases. This Mus musculus (Mouse) protein is Receptor-binding cancer antigen expressed on SiSo cells (Ebag9).